We begin with the raw amino-acid sequence, 333 residues long: Phosphoribosylformylglycinamidine cyclo-ligase (333 aa).

The protein belongs to the AIR synthase family.

The protein resides in the cytoplasm. It catalyses the reaction 2-formamido-N(1)-(5-O-phospho-beta-D-ribosyl)acetamidine + ATP = 5-amino-1-(5-phospho-beta-D-ribosyl)imidazole + ADP + phosphate + H(+). The protein operates within purine metabolism; IMP biosynthesis via de novo pathway; 5-amino-1-(5-phospho-D-ribosyl)imidazole from N(2)-formyl-N(1)-(5-phospho-D-ribosyl)glycinamide: step 2/2. The protein is Phosphoribosylformylglycinamidine cyclo-ligase of Methanosarcina acetivorans (strain ATCC 35395 / DSM 2834 / JCM 12185 / C2A).